The sequence spans 457 residues: Phosphomethylpyrimidine synthase (457 aa).

Residues Asn-80, Met-109, Tyr-139, His-175, 195-197 (SRG), 236-239 (DSLR), and Glu-275 contribute to the substrate site. His-279 is a binding site for Zn(2+). Tyr-302 contacts substrate. His-343 is a binding site for Zn(2+). Positions 423, 426, and 431 each coordinate [4Fe-4S] cluster.

This sequence belongs to the ThiC family. [4Fe-4S] cluster serves as cofactor.

The catalysed reaction is 5-amino-1-(5-phospho-beta-D-ribosyl)imidazole + S-adenosyl-L-methionine = 4-amino-2-methyl-5-(phosphooxymethyl)pyrimidine + CO + 5'-deoxyadenosine + formate + L-methionine + 3 H(+). The protein operates within cofactor biosynthesis; thiamine diphosphate biosynthesis. Functionally, catalyzes the synthesis of the hydroxymethylpyrimidine phosphate (HMP-P) moiety of thiamine from aminoimidazole ribotide (AIR) in a radical S-adenosyl-L-methionine (SAM)-dependent reaction. In Nostoc punctiforme (strain ATCC 29133 / PCC 73102), this protein is Phosphomethylpyrimidine synthase.